A 99-amino-acid polypeptide reads, in one-letter code: Protein S100-Z (99 aa).

EF-hand domains follow at residues 13-48 (ITVF…FLMS) and 50-85 (KDPM…LTVA). Ca(2+) is bound by residues S20, E23, D25, K28, E33, D63, N65, D67, E69, and E74.

It belongs to the S-100 family. Homodimer. Homodimers may assemble into larger stable oligomers. As to expression, in larva at 5 days post-fertilization, shows very restricted expression only in a few large cells of the olfactory placode. More widely expressed in the adult. Expressed at higher levels in gut than in spleen, head kidney and gill.

The protein is Protein S100-Z of Danio rerio (Zebrafish).